Consider the following 418-residue polypeptide: UDP-N-acetylglucosamine 1-carboxyvinyltransferase (418 aa).

22 to 23 (KN) is a phosphoenolpyruvate binding site. Arg-92 provides a ligand contact to UDP-N-acetyl-alpha-D-glucosamine. Catalysis depends on Cys-116, which acts as the Proton donor. Position 116 is a 2-(S-cysteinyl)pyruvic acid O-phosphothioketal (Cys-116). UDP-N-acetyl-alpha-D-glucosamine-binding positions include 121–125 (RPVDQ), Asp-306, and Ile-328.

The protein belongs to the EPSP synthase family. MurA subfamily.

It is found in the cytoplasm. The enzyme catalyses phosphoenolpyruvate + UDP-N-acetyl-alpha-D-glucosamine = UDP-N-acetyl-3-O-(1-carboxyvinyl)-alpha-D-glucosamine + phosphate. The protein operates within cell wall biogenesis; peptidoglycan biosynthesis. In terms of biological role, cell wall formation. Adds enolpyruvyl to UDP-N-acetylglucosamine. The polypeptide is UDP-N-acetylglucosamine 1-carboxyvinyltransferase (Acinetobacter baylyi (strain ATCC 33305 / BD413 / ADP1)).